The sequence spans 181 residues: Translation initiation factor IF-3 (181 aa).

This sequence belongs to the IF-3 family. Monomer.

Its subcellular location is the cytoplasm. Functionally, IF-3 binds to the 30S ribosomal subunit and shifts the equilibrium between 70S ribosomes and their 50S and 30S subunits in favor of the free subunits, thus enhancing the availability of 30S subunits on which protein synthesis initiation begins. The protein is Translation initiation factor IF-3 of Mycoplasma mycoides subsp. mycoides SC (strain CCUG 32753 / NCTC 10114 / PG1).